A 248-amino-acid polypeptide reads, in one-letter code: Ubiquinone biosynthesis O-methyltransferase (248 aa).

Residues R40, G71, D92, and M135 each coordinate S-adenosyl-L-methionine.

It belongs to the methyltransferase superfamily. UbiG/COQ3 family.

It carries out the reaction a 3-demethylubiquinol + S-adenosyl-L-methionine = a ubiquinol + S-adenosyl-L-homocysteine + H(+). The enzyme catalyses a 3-(all-trans-polyprenyl)benzene-1,2-diol + S-adenosyl-L-methionine = a 2-methoxy-6-(all-trans-polyprenyl)phenol + S-adenosyl-L-homocysteine + H(+). It participates in cofactor biosynthesis; ubiquinone biosynthesis. Functionally, O-methyltransferase that catalyzes the 2 O-methylation steps in the ubiquinone biosynthetic pathway. This is Ubiquinone biosynthesis O-methyltransferase from Dinoroseobacter shibae (strain DSM 16493 / NCIMB 14021 / DFL 12).